Reading from the N-terminus, the 142-residue chain is Large ribosomal subunit protein uL13 (142 aa).

Belongs to the universal ribosomal protein uL13 family. In terms of assembly, part of the 50S ribosomal subunit.

Functionally, this protein is one of the early assembly proteins of the 50S ribosomal subunit, although it is not seen to bind rRNA by itself. It is important during the early stages of 50S assembly. In Geobacter sp. (strain M21), this protein is Large ribosomal subunit protein uL13.